Consider the following 577-residue polypeptide: Arginine--tRNA ligase (577 aa).

Residues 122-132 carry the 'HIGH' region motif; the sequence is PNVAKEMHVGH.

Belongs to the class-I aminoacyl-tRNA synthetase family. As to quaternary structure, monomer.

The protein resides in the cytoplasm. It carries out the reaction tRNA(Arg) + L-arginine + ATP = L-arginyl-tRNA(Arg) + AMP + diphosphate. The sequence is that of Arginine--tRNA ligase from Escherichia coli (strain K12 / MC4100 / BW2952).